The chain runs to 204 residues: Urease accessory protein UreG (204 aa).

11–18 (GPVGAGKT) contributes to the GTP binding site.

Belongs to the SIMIBI class G3E GTPase family. UreG subfamily. As to quaternary structure, homodimer. UreD, UreF and UreG form a complex that acts as a GTP-hydrolysis-dependent molecular chaperone, activating the urease apoprotein by helping to assemble the nickel containing metallocenter of UreC. The UreE protein probably delivers the nickel.

It is found in the cytoplasm. In terms of biological role, facilitates the functional incorporation of the urease nickel metallocenter. This process requires GTP hydrolysis, probably effectuated by UreG. This is Urease accessory protein UreG from Staphylococcus epidermidis (strain ATCC 35984 / DSM 28319 / BCRC 17069 / CCUG 31568 / BM 3577 / RP62A).